We begin with the raw amino-acid sequence, 384 residues long: 1-deoxy-D-xylulose 5-phosphate reductoisomerase (384 aa).

Positions 10, 11, 12, 13, 37, 38, and 124 each coordinate NADPH. Lys-125 is a 1-deoxy-D-xylulose 5-phosphate binding site. An NADPH-binding site is contributed by Glu-126. Asp-150 contacts Mn(2+). 1-deoxy-D-xylulose 5-phosphate contacts are provided by Ser-151, Glu-152, Ser-176, and His-199. Glu-152 contacts Mn(2+). NADPH is bound at residue Gly-205. Positions 212, 217, 218, and 221 each coordinate 1-deoxy-D-xylulose 5-phosphate. Glu-221 is a binding site for Mn(2+).

It belongs to the DXR family. It depends on Mg(2+) as a cofactor. Mn(2+) serves as cofactor.

The enzyme catalyses 2-C-methyl-D-erythritol 4-phosphate + NADP(+) = 1-deoxy-D-xylulose 5-phosphate + NADPH + H(+). It participates in isoprenoid biosynthesis; isopentenyl diphosphate biosynthesis via DXP pathway; isopentenyl diphosphate from 1-deoxy-D-xylulose 5-phosphate: step 1/6. Functionally, catalyzes the NADPH-dependent rearrangement and reduction of 1-deoxy-D-xylulose-5-phosphate (DXP) to 2-C-methyl-D-erythritol 4-phosphate (MEP). The chain is 1-deoxy-D-xylulose 5-phosphate reductoisomerase from Clostridium perfringens (strain SM101 / Type A).